The primary structure comprises 212 residues: Holliday junction branch migration complex subunit RuvA (212 aa).

Residues 1–63 (MIAKLKGLID…EDAISLFGFL (63 aa)) are domain I. Residues 64–142 (ETGERDWFRL…KIALGGFSPG (79 aa)) are domain II. A flexible linker region spans residues 143–155 (GIKDALSASAPLP). The domain III stretch occupies residues 156–212 (AASGRMEDAVSALVNLGYKRLEAFQAVGETARELGDEADSSALIRAALKHLGKGLLG).

Belongs to the RuvA family. Homotetramer. Forms an RuvA(8)-RuvB(12)-Holliday junction (HJ) complex. HJ DNA is sandwiched between 2 RuvA tetramers; dsDNA enters through RuvA and exits via RuvB. An RuvB hexamer assembles on each DNA strand where it exits the tetramer. Each RuvB hexamer is contacted by two RuvA subunits (via domain III) on 2 adjacent RuvB subunits; this complex drives branch migration. In the full resolvosome a probable DNA-RuvA(4)-RuvB(12)-RuvC(2) complex forms which resolves the HJ.

It localises to the cytoplasm. Functionally, the RuvA-RuvB-RuvC complex processes Holliday junction (HJ) DNA during genetic recombination and DNA repair, while the RuvA-RuvB complex plays an important role in the rescue of blocked DNA replication forks via replication fork reversal (RFR). RuvA specifically binds to HJ cruciform DNA, conferring on it an open structure. The RuvB hexamer acts as an ATP-dependent pump, pulling dsDNA into and through the RuvAB complex. HJ branch migration allows RuvC to scan DNA until it finds its consensus sequence, where it cleaves and resolves the cruciform DNA. The polypeptide is Holliday junction branch migration complex subunit RuvA (Paramagnetospirillum magneticum (strain ATCC 700264 / AMB-1) (Magnetospirillum magneticum)).